The sequence spans 505 residues: Protein ERGIC-53-like (505 aa).

A signal peptide spans 1–25; that stretch reads MLEIRGLSPSLCLLSLLLVLHGAER. Residues 26-438 are Lumenal-facing; sequence SQPPPRRRFE…SGWLLGSSTC (413 aa). The L-type lectin-like domain occupies 32-254; it reads RRFEYKLSFK…DVLSFLTFSL (223 aa). Asparagine 84 is a glycosylation site (N-linked (GlcNAc...) asparagine). A disulfide bridge connects residues cysteine 177 and cysteine 216. Residues 439–459 traverse the membrane as a helical segment; that stretch reads LHTSIFLFFLLLQTVGFFCYV. The Cytoplasmic portion of the chain corresponds to 460 to 505; it reads NFSRQELDKRLQEYLSTGSLSLEPALPITRTIGVLRRQPISPSMQA.

Its subcellular location is the endoplasmic reticulum-Golgi intermediate compartment membrane. This is Protein ERGIC-53-like (Lman1l) from Mus musculus (Mouse).